Consider the following 312-residue polypeptide: Tyrosine recombinase XerC (312 aa).

A Core-binding (CB) domain is found at P10–E101. The Tyr recombinase domain occupies S122–E306. Catalysis depends on residues R165, K190, H258, R261, and H284. The O-(3'-phospho-DNA)-tyrosine intermediate role is filled by Y293.

This sequence belongs to the 'phage' integrase family. XerC subfamily. In terms of assembly, forms a cyclic heterotetrameric complex composed of two molecules of XerC and two molecules of XerD.

The protein resides in the cytoplasm. Site-specific tyrosine recombinase, which acts by catalyzing the cutting and rejoining of the recombining DNA molecules. The XerC-XerD complex is essential to convert dimers of the bacterial chromosome into monomers to permit their segregation at cell division. It also contributes to the segregational stability of plasmids. The chain is Tyrosine recombinase XerC from Mesorhizobium japonicum (strain LMG 29417 / CECT 9101 / MAFF 303099) (Mesorhizobium loti (strain MAFF 303099)).